Here is a 290-residue protein sequence, read N- to C-terminus: Plasma membrane ascorbate-dependent reductase CYBRD1 (290 aa).

Residues 1–7 (MAMEGYR) lie on the Cytoplasmic side of the membrane. A helical membrane pass occupies residues 8–32 (GFLGLLVSALLVGFLSVIFVLIWVL). Residues 15 to 220 (SALLVGFLSV…FGALIFWIVT (206 aa)) form the Cytochrome b561 domain. Residues 33–47 (HFREGLGWNGSGLEF) are Extracellular-facing. A helical transmembrane segment spans residues 48–69 (NWHPVLAVTGFVFIQGIAIIVY). Positions 50, 70, and 79 each coordinate heme b. The Cytoplasmic segment spans residues 70 to 78 (RLPWTWKCS). L-ascorbate contacts are provided by lysine 79 and lysine 83. A helical transmembrane segment spans residues 79–105 (KLLMKSIHAGLNAVAAILAIISVVAVF). Histidine 86 serves as a coordination point for heme b. Residues 106 to 118 (EYHNVQKVPHMYS) are Extracellular-facing. A Fe(3+)-binding site is contributed by histidine 108. Residues 115 to 118 (HMYS) and histidine 120 each bind heme b. Residues 119 to 144 (LHSWVGLTALILYIQQLVVGFFVFLL) form a helical membrane-spanning segment. Residues 145 to 151 (PWAPPSL) lie on the Cytoplasmic side of the membrane. Arginine 152 contributes to the L-ascorbate binding site. Residues 152–179 (RAIVMPIHVYSGLLLFGTVIATVLMGVT) form a helical membrane-spanning segment. Heme b is bound by residues histidine 159 and glutamate 180. Residues 180 to 197 (EKLFFVLKHPSYHSFPPE) lie on the Extracellular side of the membrane. Residues 198-222 (GVFTNTLGLLILVFGALIFWIVTRP) traverse the membrane as a helical segment. Over 223–290 (QWKRPREPGS…LADSGQRSTM (68 aa)) the chain is Cytoplasmic. Heme b is bound at residue lysine 225. Phosphoserine is present on serine 232. Residues 257–290 (SMDAADPADAESSSEGAARKRTLGLADSGQRSTM) are disordered. Residues 260–272 (AADPADAESSSEG) are compositionally biased toward low complexity. The residue at position 289 (threonine 289) is a Phosphothreonine.

In terms of assembly, homodimer. Heme b is required as a cofactor. In terms of tissue distribution, highly expressed in the brush-border membrane of duodenal enterocytes (at protein level). Also expressed in liver and spleen.

It localises to the cell membrane. Its subcellular location is the apical cell membrane. The catalysed reaction is Fe(3+)(out) + L-ascorbate(in) = monodehydro-L-ascorbate radical(in) + Fe(2+)(out) + H(+). It carries out the reaction Cu(2+)(out) + L-ascorbate(in) = Cu(+)(out) + monodehydro-L-ascorbate radical(in) + H(+). It catalyses the reaction monodehydro-L-ascorbate radical(out) + L-ascorbate(in) = monodehydro-L-ascorbate radical(in) + L-ascorbate(out). In terms of biological role, plasma membrane reductase that uses cytoplasmic ascorbate as an electron donor to reduce extracellular Fe(3+) into Fe(2+). Probably functions in dietary iron absorption at the brush border of duodenal enterocytes by producing Fe(2+), the divalent form of iron that can be transported into enterocytes. It is also able to reduce extracellular monodehydro-L-ascorbate and may be involved in extracellular ascorbate regeneration by erythrocytes in blood. May also act as a ferrireductase in airway epithelial cells. May also function as a cupric transmembrane reductase. This Mus musculus (Mouse) protein is Plasma membrane ascorbate-dependent reductase CYBRD1.